Here is a 100-residue protein sequence, read N- to C-terminus: Nucleoid-associated protein Caur_0522 (100 aa).

The protein belongs to the YbaB/EbfC family. As to quaternary structure, homodimer.

The protein localises to the cytoplasm. Its subcellular location is the nucleoid. Functionally, binds to DNA and alters its conformation. May be involved in regulation of gene expression, nucleoid organization and DNA protection. The chain is Nucleoid-associated protein Caur_0522 from Chloroflexus aurantiacus (strain ATCC 29366 / DSM 635 / J-10-fl).